Here is a 267-residue protein sequence, read N- to C-terminus: MASSEETPRSLAGKVALVTGAGRGIGKGIAVELAKRGASVVVNYNSAEKPAQEVVDEIAKTGSRAVAIKADITKVPEVSRLFQEALQHFGHLDIVVSNSGTEVFKPEDEVTEEDYDRVFNLNTRAQFFIAQHAYVHLRNGGRIVLMSSVAANMSGIPNHALYAGSKAAVEGFTRSFAVDAGHKKITVNAIAPGGVKTDMYDANAWHYVPNGKPGMPMEEIDKGLAAFCPLGRVAVPQDIGRVVAFLAHPDSEWVNGQVILLTGGSVT.

Positions 25, 45, 71, and 98 each coordinate NADP(+). Catalysis depends on proton donor residues Ser147 and Ser148. Residues Tyr162, Lys166, Val195, and Thr197 each contribute to the NADP(+) site. Catalysis depends on Tyr162, which acts as the Proton acceptor. Lys166 (lowers pKa of active site Tyr) is an active-site residue.

This sequence belongs to the short-chain dehydrogenases/reductases (SDR) family.

Functionally, hydroxynaphthalene reductase-like protein; part of the Pks2 gene cluster that mediates the formation of infectious structures (appressoria), enabling these fungi to kill insects faster. The product of the Pks2 gene cluster is different from the one of Pks1 and has still not been identified. In Metarhizium guizhouense (strain ARSEF 977), this protein is Hydroxynaphthalene reductase-like protein Arp2.